Reading from the N-terminus, the 689-residue chain is Ribonuclease J (689 aa).

The tract at residues 1-88 is disordered; sequence MTDNNQNNEN…RNYAQEELDS (88 aa). The span at 9–24 shows a compositional bias: basic and acidic residues; the sequence is ENHENSSENSKADEMR. The span at 56–78 shows a compositional bias: basic residues; it reads HHKKEHRPNKKPNNHHKQKHAKT. Lysine 132 and lysine 138 each carry N6-acetyllysine. Zn(2+) is bound by residues histidine 206, histidine 208, aspartate 210, histidine 211, histidine 275, and aspartate 297. N6-acetyllysine is present on residues lysine 321, lysine 335, and lysine 395. 498 to 502 provides a ligand contact to substrate; sequence HVSGH. Residue lysine 509 is modified to N6-acetyllysine. Residue histidine 524 coordinates Zn(2+). N6-acetyllysine occurs at positions 545, 632, and 647.

This sequence belongs to the metallo-beta-lactamase superfamily. RNA-metabolizing metallo-beta-lactamase-like family. Bacterial RNase J subfamily. In terms of assembly, homodimer. Homotetramer; dimer of homodimers. Interacts with RNA helicase RhpA, might be a member of a minimal RNA degradosome complex. Zn(2+) serves as cofactor. Post-translationally, acetylated on nine lysine residues. Some of the residues are acetylated by multiple different mechanisms. RimL is partially responsible for the acetylation of Lys-321, Lys-395 and Lys-647. HPB8_1270 homolog is partially responsible for the acetylation of Lys-321, Lys-395, Lys-509 and Lys-647. Acetyl-phosphate-mediated non-enzymatic acetylation pathway takes part in the acetylation of Lys-132, Lys-321, Lys-395, Lys-509 and Lys-647. Acetylation of the remaining residues Lys-138, Lys-335, Lys-545 and Lys-632 occurs by a yet undetermined mechanism. Acetylation on a number of these residues is important for growth regulation and proper cell morphology.

The protein resides in the cytoplasm. Catalytic activity is regulated by the balance between homodimers and homotetramers, with homotetramers being the active forms of this enzyme. Acetylation allosterically regulates the homooligomerization state and hence the catalytic activity. An RNase that has 5'-3' exoribonuclease and endoribonuclease activity. Degrades 5'-monophosphorylated ssRNA and dsRNA, considerably more active on ssRNA. Association with RhpA significantly increases the dsRNase activity. Degrades RNA substrate with hairpin structures at both ends with low activity, but presence of RhpA significantly increases the activity on this substrate. Stimulates ATPase activity of RNA helicase RhpA. Involved in stabilization of mRNA but apparently not rRNA. In Helicobacter pylori (strain ATCC 700392 / 26695) (Campylobacter pylori), this protein is Ribonuclease J.